A 405-amino-acid chain; its full sequence is Accessory Sec system protein translocase subunit SecY2 (405 aa).

10 consecutive transmembrane segments (helical) span residues 14–34, 65–85, 104–124, 131–151, 156–176, 191–211, 247–267, 285–305, 343–363, and 368–388; these read LFTS…LPFV, IFSV…MFSF, MYLT…RLPV, ILVV…LVWL, ASMG…LNIP, GIIV…ALMY, MYVM…GFIF, PLWV…FAFV, FSVI…LFVL, and LLRL…IFTI.

The protein belongs to the SecY/SEC61-alpha family. SecY2 subfamily. As to quaternary structure, component of the accessory SecA2/SecY2 protein translocase complex required to export cell wall proteins. May form heterotrimers with SecE and SecG subunits.

It localises to the cell membrane. Its function is as follows. Part of the accessory SecA2/SecY2 system specifically required for export of possible cell wall proteins. The central subunit of a protein translocation channel. The sequence is that of Accessory Sec system protein translocase subunit SecY2 from Streptococcus pneumoniae serotype 4 (strain ATCC BAA-334 / TIGR4).